The sequence spans 446 residues: UDP-N-acetylglucosamine--dolichyl-phosphate N-acetylglucosaminephosphotransferase (446 aa).

Helical transmembrane passes span 1–21 and 25–45; these read MIES…LMNQ and PLLS…MFIP. UDP-N-acetyl-alpha-D-glucosamine is bound by residues 59-61 and E71; that span reads KDM. 2 helical membrane passes run 73–93 and 123–143; these read MGAV…PVLF and LLGA…LGIL. A dolichyl phosphate-binding site is contributed by K154. 2 consecutive transmembrane segments (helical) span residues 155-175 and 191-211; these read FFLP…DYGV and SLIN…IFCP. 208–216 lines the dolichyl phosphate pocket; the sequence is IFCPNSINI. N215 serves as a coordination point for Mg(2+). The next 4 helical transmembrane spans lie at 216 to 236, 254 to 274, 282 to 302, and 311 to 331; these read IIAG…LVIA, AHLL…GLLK, VFVG…VGIL, and LFFI…FGLV. Residue N221 participates in UDP-N-acetyl-alpha-D-glucosamine binding. Mg(2+) is bound at residue D286. 335–337 lines the UDP-N-acetyl-alpha-D-glucosamine pocket; the sequence is RHR. N395 carries an N-linked (GlcNAc...) asparagine glycan. Residues 412-432 traverse the membrane as a helical segment; sequence DHLTICIMGLQLLTGIFGLII.

This sequence belongs to the glycosyltransferase 4 family. The cofactor is Mg(2+).

The protein resides in the endoplasmic reticulum membrane. The catalysed reaction is a di-trans,poly-cis-dolichyl phosphate + UDP-N-acetyl-alpha-D-glucosamine = an N-acetyl-alpha-D-glucosaminyl-diphospho-di-trans,poly-cis-dolichol + UMP. The protein operates within protein modification; protein glycosylation. Inhibited by natural nucleoside antibiotic tunicamycin, which acts as a structural analog and competitor of UDP-GlcNAc. In terms of biological role, UDP-N-acetylglucosamine--dolichyl-phosphate N-acetylglucosaminephosphotransferase that operates in the biosynthetic pathway of dolichol-linked oligosaccharides, the glycan precursors employed in protein asparagine (N)-glycosylation. The assembly of dolichol-linked oligosaccharides begins on the cytosolic side of the endoplasmic reticulum membrane and finishes in its lumen. The sequential addition of sugars to dolichol pyrophosphate produces dolichol-linked oligosaccharides containing fourteen sugars, including two GlcNAcs, nine mannoses and three glucoses. Once assembled, the oligosaccharide is transferred from the lipid to nascent proteins by oligosaccharyltransferases. Catalyzes the initial step of dolichol-linked oligosaccharide biosynthesis, transfering GlcNAc-1-P from cytosolic UDP-GlcNAc onto the carrier lipid dolichyl phosphate (P-dolichol), yielding GlcNAc-P-P-dolichol embedded in the cytoplasmic leaflet of the endoplasmic reticulum membrane. The chain is UDP-N-acetylglucosamine--dolichyl-phosphate N-acetylglucosaminephosphotransferase (gpt2) from Schizosaccharomyces pombe (strain 972 / ATCC 24843) (Fission yeast).